A 213-amino-acid polypeptide reads, in one-letter code: Large ribosomal subunit protein uL3 (213 aa).

The interval 135–155 (THGSKNHRLPGSTGAGTTPGR) is disordered.

It belongs to the universal ribosomal protein uL3 family. In terms of assembly, part of the 50S ribosomal subunit. Forms a cluster with proteins L14 and L19.

One of the primary rRNA binding proteins, it binds directly near the 3'-end of the 23S rRNA, where it nucleates assembly of the 50S subunit. In Synechocystis sp. (strain ATCC 27184 / PCC 6803 / Kazusa), this protein is Large ribosomal subunit protein uL3.